The sequence spans 113 residues: Hydrogenase maturation factor HypA (113 aa).

His2 is a binding site for Ni(2+). Zn(2+)-binding residues include Cys73, Cys76, Cys89, and Cys92.

Belongs to the HypA/HybF family.

Involved in the maturation of [NiFe] hydrogenases. Required for nickel insertion into the metal center of the hydrogenase. The chain is Hydrogenase maturation factor HypA from Xanthobacter autotrophicus (strain ATCC BAA-1158 / Py2).